The following is a 401-amino-acid chain: All trans-polyprenyl-diphosphate synthase PDSS2 (401 aa).

This sequence belongs to the FPP/GGPP synthase family. Heterotetramer composed of 2 PDSS1/DPS1 and 2 PDSS2/DLP1 subunits.

The protein resides in the mitochondrion. The enzyme catalyses 7 isopentenyl diphosphate + (2E,6E)-farnesyl diphosphate = all-trans-decaprenyl diphosphate + 7 diphosphate. It carries out the reaction 6 isopentenyl diphosphate + (2E,6E)-farnesyl diphosphate = all-trans-nonaprenyl diphosphate + 6 diphosphate. The protein operates within cofactor biosynthesis; ubiquinone biosynthesis. Heterotetrameric enzyme that catalyzes the condensation of farnesyl diphosphate (FPP), which acts as a primer, and isopentenyl diphosphate (IPP) to produce prenyl diphosphates of varying chain lengths and participates in the determination of the side chain of ubiquinone. Supplies nona and decaprenyl diphosphate, the precursors for the side chain of the isoprenoid quinones ubiquinone-9 (Q9) and ubiquinone-10 (Q10) respectively. The enzyme adds isopentenyl diphosphate molecules sequentially to farnesyl diphosphate with trans stereochemistry. May play a role during cerebellar development. May regulate mitochondrial respiratory chain function. This Rattus norvegicus (Rat) protein is All trans-polyprenyl-diphosphate synthase PDSS2.